The chain runs to 164 residues: Interferon gamma (164 aa).

An N-terminal signal peptide occupies residues 1-19; the sequence is MTCQTYNLFVLSVIMIYYG. N-linked (GlcNAc...) asparagine glycosylation is found at Asn42 and Asn61.

It belongs to the type II (or gamma) interferon family. In terms of assembly, homodimer.

Its subcellular location is the secreted. Its function is as follows. Produced by lymphocytes activated by specific antigens or mitogens. IFN-gamma, in addition to having antiviral activity, has important immunoregulatory functions. It is a potent activator of macrophages, it has antiproliferative effects on transformed cells and it can potentiate the antiviral and antitumor effects of the type I interferons. The polypeptide is Interferon gamma (IFNG) (Numida meleagris (Helmeted guineafowl)).